Consider the following 424-residue polypeptide: Keratin, type I cytoskeletal 20 (424 aa).

The interval M1–N69 is head. S13 is subject to Phosphoserine; by MAPKAPK2, MAPKAPK3 and PKC. A coil 1A region spans residues E70–W105. The 312-residue stretch at E70–T381 folds into the IF rod domain. The tract at residues Y106–Q123 is linker 1. The interval I124–L215 is coil 1B. The segment at H216–I238 is linker 12. The coil 2 stretch occupies residues M239–E377. Positions D378 to I424 are tail.

It belongs to the intermediate filament family. As to quaternary structure, heterotetramer of two type I and two type II keratins. Associates with KRT8. In terms of processing, hyperphosphorylation at Ser-13 occurs during the early stages of apoptosis but becomes less prominent during the later stages. Phosphorylation at Ser-13 also increases in response to stress brought on by cell injury. Post-translationally, proteolytically cleaved by caspases during apoptosis. Cleavage occurs at Asp-228. Expressed predominantly in the intestinal epithelium. Expressed in luminal cells of colonic mucosa. Also expressed in the Merkel cells of keratinized oral mucosa; specifically at the tips of some rete ridges of the gingival mucosa, in the basal layer of the palatal mucosa and in the taste buds of lingual mucosa.

The protein resides in the cytoplasm. Functionally, plays a significant role in maintaining keratin filament organization in intestinal epithelia. When phosphorylated, plays a role in the secretion of mucin in the small intestine. In Homo sapiens (Human), this protein is Keratin, type I cytoskeletal 20 (KRT20).